The following is a 293-amino-acid chain: Fructose-bisphosphate aldolase (293 aa).

Serine 50 is a D-glyceraldehyde 3-phosphate binding site. Aspartate 85 (proton donor) is an active-site residue. Zn(2+)-binding residues include histidine 86, aspartate 106, glutamate 136, and histidine 178. Glycine 179 is a binding site for dihydroxyacetone phosphate. Histidine 208 contacts Zn(2+). Residues 209 to 211 (GGS) and 230 to 233 (NVNT) each bind dihydroxyacetone phosphate.

Belongs to the class II fructose-bisphosphate aldolase family. It depends on Zn(2+) as a cofactor.

It carries out the reaction beta-D-fructose 1,6-bisphosphate = D-glyceraldehyde 3-phosphate + dihydroxyacetone phosphate. It participates in carbohydrate degradation; glycolysis; D-glyceraldehyde 3-phosphate and glycerone phosphate from D-glucose: step 4/4. In terms of biological role, catalyzes the aldol condensation of dihydroxyacetone phosphate (DHAP or glycerone-phosphate) with glyceraldehyde 3-phosphate (G3P) to form fructose 1,6-bisphosphate (FBP) in gluconeogenesis and the reverse reaction in glycolysis. This is Fructose-bisphosphate aldolase (fba) from Streptococcus pyogenes serotype M3 (strain ATCC BAA-595 / MGAS315).